Reading from the N-terminus, the 125-residue chain is Photosystem I reaction center subunit IV, chloroplastic (125 aa).

The N-terminal 34 residues, 1–34 (MASIASSVAVRLGLTQVLPNKNFSSPRSTRLVVR), are a transit peptide targeting the chloroplast. The span at 42 to 57 (APAAASPEGEAPKAAA) shows a compositional bias: low complexity. The segment at 42 to 68 (APAAASPEGEAPKAAAKPPPIGPKRGS) is disordered.

Belongs to the PsaE family.

The protein resides in the plastid. It localises to the chloroplast thylakoid membrane. In terms of biological role, stabilizes the interaction between PsaC and the PSI core, assists the docking of the ferredoxin to PSI and interacts with ferredoxin-NADP oxidoreductase. The protein is Photosystem I reaction center subunit IV, chloroplastic (PSAE-1) of Spinacia oleracea (Spinach).